A 133-amino-acid polypeptide reads, in one-letter code: Large ribosomal subunit protein uL15 (133 aa).

A disordered region spans residues 1–60 (MALENLKPAQGSTKDRKRVGRGQGSGMGKTSTRGGKGQTARTGYKAKRGFEGGQQPLQRR).

It belongs to the universal ribosomal protein uL15 family. In terms of assembly, part of the 50S ribosomal subunit.

Its function is as follows. Binds to the 23S rRNA. In Wolinella succinogenes (strain ATCC 29543 / DSM 1740 / CCUG 13145 / JCM 31913 / LMG 7466 / NCTC 11488 / FDC 602W) (Vibrio succinogenes), this protein is Large ribosomal subunit protein uL15.